The sequence spans 71 residues: Small ribosomal subunit protein bS21 (71 aa).

Belongs to the bacterial ribosomal protein bS21 family.

The polypeptide is Small ribosomal subunit protein bS21 (Hydrogenovibrio crunogenus (strain DSM 25203 / XCL-2) (Thiomicrospira crunogena)).